We begin with the raw amino-acid sequence, 160 residues long: Siroheme decarboxylase NirH subunit (160 aa).

Belongs to the Ahb/Nir family. Forms a complex composed of NirDL, NirG and NirH. All proteins are required for the total conversion of siroheme to didecarboxysiroheme.

It catalyses the reaction siroheme + 2 H(+) = 12,18-didecarboxysiroheme + 2 CO2. It functions in the pathway porphyrin-containing compound metabolism. In terms of biological role, involved in heme d1 biosynthesis. Catalyzes the decarboxylation of siroheme into didecarboxysiroheme. Siroheme is probably decarboxylated to monodecarboxysiroheme, which is in turn decarboxylated to didecarboxysiroheme. The chain is Siroheme decarboxylase NirH subunit from Paracoccus pantotrophus (Thiosphaera pantotropha).